Consider the following 201-residue polypeptide: Imidazole glycerol phosphate synthase subunit HisH 1 (201 aa).

The 201-residue stretch at 1 to 201 (MIALIDYKAG…LKLLENFIRL (201 aa)) folds into the Glutamine amidotransferase type-1 domain. The active-site Nucleophile is cysteine 80. Catalysis depends on residues histidine 183 and glutamate 185.

Heterodimer of HisH and HisF.

It localises to the cytoplasm. It carries out the reaction 5-[(5-phospho-1-deoxy-D-ribulos-1-ylimino)methylamino]-1-(5-phospho-beta-D-ribosyl)imidazole-4-carboxamide + L-glutamine = D-erythro-1-(imidazol-4-yl)glycerol 3-phosphate + 5-amino-1-(5-phospho-beta-D-ribosyl)imidazole-4-carboxamide + L-glutamate + H(+). It catalyses the reaction L-glutamine + H2O = L-glutamate + NH4(+). It functions in the pathway amino-acid biosynthesis; L-histidine biosynthesis; L-histidine from 5-phospho-alpha-D-ribose 1-diphosphate: step 5/9. IGPS catalyzes the conversion of PRFAR and glutamine to IGP, AICAR and glutamate. The HisH subunit provides the glutamine amidotransferase activity that produces the ammonia necessary to HisF for the synthesis of IGP and AICAR. In Campylobacter jejuni (strain RM1221), this protein is Imidazole glycerol phosphate synthase subunit HisH 1.